The sequence spans 317 residues: uncharacterized protein (317 aa).

The span at 68–78 (DSTNTDISNET) shows a compositional bias: low complexity. The tract at residues 68 to 87 (DSTNTDISNETPILSNNTPI) is disordered.

This is an uncharacterized protein from Methanocaldococcus jannaschii (strain ATCC 43067 / DSM 2661 / JAL-1 / JCM 10045 / NBRC 100440) (Methanococcus jannaschii).